Here is a 185-residue protein sequence, read N- to C-terminus: HTH-type transcriptional regulator SACOL2593 (185 aa).

One can recognise an HTH tetR-type domain in the interval 6-66 (KENRQRIEEI…YVIQRDLDIF (61 aa)). Positions 29–48 (SMNRIAKELGIGMGTLYRHF) form a DNA-binding region, H-T-H motif.

The chain is HTH-type transcriptional regulator SACOL2593 from Staphylococcus aureus (strain COL).